The primary structure comprises 705 residues: Polyribonucleotide nucleotidyltransferase (705 aa).

Residues D487 and D493 each coordinate Mg(2+). The region spanning 554–613 (PKILTMKINPDKIRDVIGPSGKQINKIIEDTGVKIDIEQDGTIFISSTEEDMNQKAKKII) is the KH domain. Residues 623–691 (GQLYLGKVKR…KQGRVNLSRK (69 aa)) form the S1 motif domain.

Belongs to the polyribonucleotide nucleotidyltransferase family. Requires Mg(2+) as cofactor.

Its subcellular location is the cytoplasm. The catalysed reaction is RNA(n+1) + phosphate = RNA(n) + a ribonucleoside 5'-diphosphate. Involved in mRNA degradation. Catalyzes the phosphorolysis of single-stranded polyribonucleotides processively in the 3'- to 5'-direction. The chain is Polyribonucleotide nucleotidyltransferase from Bacillus pumilus (strain SAFR-032).